The chain runs to 108 residues: Glutaredoxin-1 (108 aa).

The Glutaredoxin domain maps to 3–106 (EEFVQQRLAN…DILSSIGVLR (104 aa)). The cysteines at positions 23 and 26 are disulfide-linked.

The protein belongs to the glutaredoxin family.

It localises to the virion. In terms of biological role, displays thioltransferase and dehydroascorbate reductase activities. The protein is Glutaredoxin-1 (OPG075) of Vaccinia virus (strain Copenhagen) (VACV).